The following is a 331-amino-acid chain: Ribosomal RNA small subunit methyltransferase H (331 aa).

S-adenosyl-L-methionine is bound by residues 38–40 (GGY), Asp56, Phe83, Asp100, and Gln107. A disordered region spans residues 287 to 331 (DEAELAENPRARSARLRVGVRTDAPAGKVDPQALGTPLIPKKGRR).

Belongs to the methyltransferase superfamily. RsmH family.

Its subcellular location is the cytoplasm. It catalyses the reaction cytidine(1402) in 16S rRNA + S-adenosyl-L-methionine = N(4)-methylcytidine(1402) in 16S rRNA + S-adenosyl-L-homocysteine + H(+). In terms of biological role, specifically methylates the N4 position of cytidine in position 1402 (C1402) of 16S rRNA. The protein is Ribosomal RNA small subunit methyltransferase H of Cereibacter sphaeroides (strain KD131 / KCTC 12085) (Rhodobacter sphaeroides).